The following is a 288-amino-acid chain: ATP synthase gamma chain (288 aa).

Belongs to the ATPase gamma chain family. F-type ATPases have 2 components, CF(1) - the catalytic core - and CF(0) - the membrane proton channel. CF(1) has five subunits: alpha(3), beta(3), gamma(1), delta(1), epsilon(1). CF(0) has three main subunits: a, b and c.

It localises to the cell inner membrane. Produces ATP from ADP in the presence of a proton gradient across the membrane. The gamma chain is believed to be important in regulating ATPase activity and the flow of protons through the CF(0) complex. The sequence is that of ATP synthase gamma chain from Polaromonas naphthalenivorans (strain CJ2).